The primary structure comprises 379 residues: Junctional adhesion molecule-like (379 aa).

Residues 1–20 (MLCLLKLIVIPVILAPVGYP) form the signal peptide. Residues 21 to 281 (QGLPGLTVSS…QQGILNGNQL (261 aa)) are Extracellular-facing. 2 consecutive Ig-like V-type domains span residues 24-135 (PGLT…KPVE) and 140-250 (PEEP…KTIV). Residues Cys45 and Cys119 are joined by a disulfide bond. Asn79, Asn89, and Asn125 each carry an N-linked (GlcNAc...) asparagine glycan. Cysteines 158 and 236 form a disulfide. A helical membrane pass occupies residues 282-302 (VIIVGIVCATFLLLPVLILIV). Residues 303-379 (KKAKWNKSSV…SLVRSSVRSK (77 aa)) are Cytoplasmic-facing. Tyr355 carries the post-translational modification Phosphotyrosine.

Belongs to the immunoglobulin superfamily. Homodimer; active form in leukocyte-endothelial cell adhesion. Interacts (homodimeric form) with CXADR. Interacts (via cytoplasmic domain) with the PI3 kinase; upon CXADR-binding. Interacts with ITGA4 and ITGB1; integrin alpha-4/beta-1 may regulate leukocyte to endothelial cells adhesion by controlling JAML homodimerization. In terms of tissue distribution, expressed by gamma-delta intraepithelial T cells (at protein level).

The protein resides in the cell membrane. Its subcellular location is the cell junction. Its function is as follows. Transmembrane protein of the plasma membrane of leukocytes that control their migration and activation through interaction with CXADR, a plasma membrane receptor found on adjacent epithelial and endothelial cells. The interaction between both receptors mediates the activation of gamma-delta T-cells, a subpopulation of T-cells residing in epithelia and involved in tissue homeostasis and repair. Upon epithelial CXADR-binding, JAML induces downstream cell signaling events in gamma-delta T-cells through PI3-kinase and MAP kinases. It results in proliferation and production of cytokines and growth factors by T-cells that in turn stimulate epithelial tissues repair. It also controls the transmigration of leukocytes within epithelial and endothelial tissues through adhesive interactions with epithelial and endothelial CXADR. The polypeptide is Junctional adhesion molecule-like (Mus musculus (Mouse)).